The following is a 386-amino-acid chain: Vesicle-associated protein 2-2 (386 aa).

N-acetylmethionine is present on methionine 1. Over 1–363 (MNMPLLDIQP…TKKIVKEVHN (363 aa)) the chain is Cytoplasmic. The MSP domain maps to 5-125 (LLDIQPRTLQ…EENKLRVTLV (121 aa)). Serine 279 bears the Phosphoserine mark. Residues 300-353 (ELKLVKDIEEMKLKVDALESKLKQADSTISKLMEERSISSQHRQSLQHELAELR) adopt a coiled-coil conformation. A helical; Anchor for type IV membrane protein membrane pass occupies residues 364-384 (GFPLLYVCVVAFIAYVIGHFL).

This sequence belongs to the VAMP-associated protein (VAP) (TC 9.B.17) family. Interacts with cowpea mosaic virus (CPMV) NTP-binding protein (NTB).

Its subcellular location is the endoplasmic reticulum membrane. In terms of biological role, may play a role in vesicle trafficking. The chain is Vesicle-associated protein 2-2 (PVA22) from Arabidopsis thaliana (Mouse-ear cress).